The sequence spans 339 residues: Annexin A2 (339 aa).

Ser-2 carries the post-translational modification N-acetylserine. Residues 2–24 (STVHEILCKLSLEGDHSTPPSAY) are S100A10-binding site. Tyr-24 carries the post-translational modification Phosphotyrosine; by SRC. The residue at position 26 (Ser-26) is a Phosphoserine; by PKC. Annexin repeat units lie at residues 33-104 (FDAE…GLLK) and 105-176 (TPAQ…ALAK). Lys-49 carries the N6-acetyllysine; alternate modification. Residue Lys-49 forms a Glycyl lysine isopeptide (Lys-Gly) (interchain with G-Cter in SUMO1); alternate linkage. Lys-49 is covalently cross-linked (Glycyl lysine isopeptide (Lys-Gly) (interchain with G-Cter in SUMO2); alternate). Lys-152 bears the N6-acetyllysine mark. Ser-184 is subject to Phosphoserine. 2 Annexin repeats span residues 189–261 (ELID…NLVQ) and 265–336 (NKPL…YLCG). A Phosphotyrosine modification is found at Tyr-199. Lys-227 carries the N6-acetyllysine modification.

This sequence belongs to the annexin family. Heterotetramer containing 2 light chains of S100A10/p11 and 2 heavy chains of ANXA2/p36. Interacts with ATP1B1. Interacts with DYSF. Interacts with COCH. Interacts (via repeat Annexin 1) with PCSK9 (via the C-terminal domain); the interaction inhibits the degradation of LDLR. Interacts with CEACAM1 (via the cytoplasmic domain); this interaction is regulated by phosphorylation of CEACAM1. Interacts with APPL2 and APPL1; targets APPL2 to endosomes and acting in parallel to RAB5A. Interacts with S100A4. May interact with UBAP2. Interacts with PLEKHG4B; this interaction is required for PLEKHG4B localization to cell-cell adhesions. Interacts with FAM13A. Interacts with salivary cystatin-L2 (via loop 2) from the tick Ixodes scapularis; the interaction results in reduced activation of mouse NLRC4 inflammasome formation upon Anaplasma phagocytophilum infection. ISGylated.

It is found in the secreted. The protein resides in the extracellular space. The protein localises to the extracellular matrix. It localises to the basement membrane. Its subcellular location is the melanosome. It is found in the early endosome. Functionally, calcium-regulated membrane-binding protein whose affinity for calcium is greatly enhanced by anionic phospholipids. It binds two calcium ions with high affinity. May be involved in heat-stress response. Inhibits PCSK9-enhanced LDLR degradation, probably reduces PCSK9 protein levels via a translational mechanism but also competes with LDLR for binding with PCSK9. Binds to endosomes damaged by phagocytosis of particulate wear debris and participates in endosomal membrane stabilization, thereby limiting NLRP3 inflammasome activation. Required for endothelial cell surface plasmin generation and may support fibrinolytic surveillance and neoangiogenesis. In terms of biological role, (Microbial infection) Regulates the formation of the NLRC4 inflammasome triggered by Anaplasma phagocytophilum infection. Its function is as follows. (Microbial infection) Protects against Klebsiella pneumoniae infection. Attenuates bacteria-induced pulmonary inflammation and promotes intro-abdominal pathogen clearance. Promotes anti-inflammatory responses by facilitating TLR4 internalization and translocation into early endosomal membranes; this leads to activation of TRAM-dependent endosomal signaling and release of anti-inflammatory cytokines. (Microbial infection) Promotes macrophage phagocytic efficiency towards Cryptococcus neoformans and ability to control fungal infection inside the cells. Functionally, (Microbial infection) Contributes to protection against Pseudomonas aeruginosa infection by regulating autophagy via the AKT1-mTOR-ULK1/2 signaling pathway and activation of Rho GTPases via FAM13A-mediated mechanism. In Mus musculus (Mouse), this protein is Annexin A2 (Anxa2).